Consider the following 365-residue polypeptide: Fatty acid hydroxylase vlmA (365 aa).

Residues 20 to 41 are disordered; it reads TTIKRRQNDKTKTPKTKPVSKI. Asn-47 carries N-linked (GlcNAc...) asparagine glycosylation. Transmembrane regions (helical) follow at residues 62-82, 89-109, 144-164, and 179-199; these read ILLQ…VLSI, VHPF…FRFL, LNWS…LVAY, and WWAW…FYYY. The Fatty acid hydroxylase domain maps to 189-335; it reads LYPIILDFYY…TRIWDRLFGT (147 aa).

Belongs to the sterol desaturase family. TMEM195 subfamily.

It is found in the membrane. The protein operates within secondary metabolite biosynthesis. In terms of biological role, fatty acid hydroxylase; part of the gene cluster that mediates the biosynthesis of verlamelin, a lipopeptide that exhibits antifungal activity against plant pathogenic fungi. Verlamelin is a cyclic hexadepsipeptide and is bridged by ester bonding between a 5-hydroxytetradecanoic acid moiety and a carboxyl group on the terminal Val of amide-bonded tetradecanoyl-hexapeptide D-allo-Thr-D-Ala-L-Pro-L-Gln-D-Tyr-L-Val. VlmA and vlmB are altogether regarded as essential components in the biosynthesis of 5-hydroxytetradecanoic acid. VlmA catalyzes the hydroxylation at position C5 of tetradecanoic acid produced in primary metabolism, while the precise function of vlmB still remains to be solved. To be loaded onto the waiting NRPS, 5-hydroxytetradecanoic acid is activated in the form of acyladenylate by the AMP-dependent ligase vlmC. VlmS seems to accept the fatty-acyl intermediate onto the initial module to further elongate amino acid residues by the downstream modules. In addition, in the last module at its C-terminus, vlmS contains a surplus condensation (C) domain that may be involved in cyclization, the last step to form verlamelin. This chain is Fatty acid hydroxylase vlmA, found in Lecanicillium sp.